The primary structure comprises 198 residues: MKELTNRQKMVLDFITSYIQQNGYSPSIRDIAKHFKLTPRGAHIHVLALEKKGYITRNPKNSRSISLVKRPETVSIPVKGKISAGQGIEMFELVDEEIEIPVRMINGYGNYFALRVEGTSMIEAHIIDGDYVILKKQYRIPNGQIAAVVFDNKVTLKRFYHKNDKVELVPENSSMSPIICDAKDVKVIGKLVGVIRIY.

Residues 28–47 (IRDIAKHFKLTPRGAHIHVL) constitute a DNA-binding region (H-T-H motif). Active-site for autocatalytic cleavage activity residues include Ser-120 and Lys-157.

This sequence belongs to the peptidase S24 family. Homodimer.

It carries out the reaction Hydrolysis of Ala-|-Gly bond in repressor LexA.. Functionally, represses a number of genes involved in the response to DNA damage (SOS response), including recA and lexA. In the presence of single-stranded DNA, RecA interacts with LexA causing an autocatalytic cleavage which disrupts the DNA-binding part of LexA, leading to derepression of the SOS regulon and eventually DNA repair. The protein is LexA repressor of Thermosipho africanus (strain TCF52B).